We begin with the raw amino-acid sequence, 59 residues long: UPF0434 protein PBPRA2383 (59 aa).

This sequence belongs to the UPF0434 family.

The sequence is that of UPF0434 protein PBPRA2383 from Photobacterium profundum (strain SS9).